The primary structure comprises 208 residues: Microcin J25-processing protein McjB (208 aa).

The protein localises to the cytoplasm. In terms of biological role, along with McjC, necessary and sufficient to process the inactive microcin J25 (McjA) precursor into the active peptide. This is Microcin J25-processing protein McjB (mcjB) from Escherichia coli.